The following is a 357-amino-acid chain: Isopentenyl-diphosphate delta-isomerase (357 aa).

13 to 14 is a substrate binding site; sequence RK. Residues S71, 72–74, S102, and N131 contribute to the FMN site; that span reads SMT. 102–104 contributes to the substrate binding site; it reads SMR. Q166 contacts substrate. E167 contacts Mg(2+). FMN-binding positions include K198 and 311-312; that span reads AR.

It belongs to the IPP isomerase type 2 family. As to quaternary structure, homooctamer. Dimer of tetramers. FMN serves as cofactor. It depends on NADPH as a cofactor. Mg(2+) is required as a cofactor.

Its subcellular location is the cytoplasm. The enzyme catalyses isopentenyl diphosphate = dimethylallyl diphosphate. In terms of biological role, involved in the biosynthesis of isoprenoids. Catalyzes the 1,3-allylic rearrangement of the homoallylic substrate isopentenyl (IPP) to its allylic isomer, dimethylallyl diphosphate (DMAPP). The sequence is that of Isopentenyl-diphosphate delta-isomerase from Chlorobium chlorochromatii (strain CaD3).